Reading from the N-terminus, the 397-residue chain is Protein irld-34 (397 aa).

The chain is Protein irld-34 from Caenorhabditis elegans.